Here is an 86-residue protein sequence, read N- to C-terminus: RNA-binding protein Hfq (86 aa).

The Sm domain occupies 9–68 (DIFLNVLRRERIQVSIYLFNGIKLQGHIESFDQFVIVLKNTISQMVYKHAVSTIVPSKFV).

The protein belongs to the Hfq family. As to quaternary structure, homohexamer.

Its function is as follows. RNA chaperone that binds small regulatory RNA (sRNAs) and mRNAs to facilitate mRNA translational regulation in response to envelope stress, environmental stress and changes in metabolite concentrations. Also binds with high specificity to tRNAs. The chain is RNA-binding protein Hfq from Baumannia cicadellinicola subsp. Homalodisca coagulata.